A 188-amino-acid chain; its full sequence is Threonylcarbamoyl-AMP synthase (188 aa).

One can recognise a YrdC-like domain in the interval 3–188 (QLHPSDIKDV…RSGKILRNGQ (186 aa)).

This sequence belongs to the SUA5 family. TsaC subfamily.

The protein localises to the cytoplasm. It carries out the reaction L-threonine + hydrogencarbonate + ATP = L-threonylcarbamoyladenylate + diphosphate + H2O. In terms of biological role, required for the formation of a threonylcarbamoyl group on adenosine at position 37 (t(6)A37) in tRNAs that read codons beginning with adenine. Catalyzes the conversion of L-threonine, HCO(3)(-)/CO(2) and ATP to give threonylcarbamoyl-AMP (TC-AMP) as the acyladenylate intermediate, with the release of diphosphate. The sequence is that of Threonylcarbamoyl-AMP synthase from Shewanella oneidensis (strain ATCC 700550 / JCM 31522 / CIP 106686 / LMG 19005 / NCIMB 14063 / MR-1).